The sequence spans 299 residues: Cathepsin B-like CP3 (299 aa).

Positions methionine 1 to serine 19 are cleaved as a signal peptide. Disulfide bonds link cysteine 87/cysteine 114, cysteine 97/cysteine 140, and cysteine 133/cysteine 176. Cysteine 100 is an active-site residue. Catalysis depends on residues histidine 244 and asparagine 265.

This sequence belongs to the peptidase C1 family.

The protein resides in the vacuole. In terms of biological role, thiol protease which is required for parasite excystation and invasion of the proximal small intestine of the human host. This Giardia intestinalis (Giardia lamblia) protein is Cathepsin B-like CP3 (CP3).